The following is a 289-amino-acid chain: Release factor glutamine methyltransferase (289 aa).

S-adenosyl-L-methionine is bound by residues 130 to 134 (GTGTG), D153, W182, and N196. 196–199 (NPPY) is a substrate binding site.

The protein belongs to the protein N5-glutamine methyltransferase family. PrmC subfamily.

It catalyses the reaction L-glutaminyl-[peptide chain release factor] + S-adenosyl-L-methionine = N(5)-methyl-L-glutaminyl-[peptide chain release factor] + S-adenosyl-L-homocysteine + H(+). Its function is as follows. Methylates the class 1 translation termination release factors RF1/PrfA and RF2/PrfB on the glutamine residue of the universally conserved GGQ motif. This Agrobacterium fabrum (strain C58 / ATCC 33970) (Agrobacterium tumefaciens (strain C58)) protein is Release factor glutamine methyltransferase.